The primary structure comprises 290 residues: Putative transport permease ycf38 (290 aa).

7 helical membrane-spanning segments follow: residues 21–41 (VTSF…FIQL), 46–66 (ITLI…GALF), 86–106 (PGIL…PLIF), 133–153 (FFIS…GVFL), 167–187 (FFFL…LALL), 194–213 (LIAV…TALA), and 261–281 (INIG…FLLF). Positions 46 to 284 (ITLISGILQP…LVGFLLFKKI (239 aa)) constitute an ABC transmembrane type-2 domain.

The protein belongs to the ABC-2 integral membrane protein family.

Its subcellular location is the plastid. The protein resides in the cyanelle membrane. The polypeptide is Putative transport permease ycf38 (ycf38) (Cyanophora paradoxa).